Reading from the N-terminus, the 247-residue chain is NAD-dependent protein deacetylase (247 aa).

The region spanning 1–244 (MIYEKVAEEL…PKILENVRQK (244 aa)) is the Deacetylase sirtuin-type domain. Positions 22, 26, 33, 34, 98, 100, 101, and 116 each coordinate NAD(+). Residue phenylalanine 33 participates in nicotinamide binding. Positions 100 and 101 each coordinate nicotinamide. The active-site Proton acceptor is the histidine 116. Cysteine 124, cysteine 127, cysteine 149, and cysteine 151 together coordinate Zn(2+). Serine 187, serine 188, asparagine 212, and valine 230 together coordinate NAD(+).

It belongs to the sirtuin family. Class U subfamily. As to quaternary structure, monomer. Requires Zn(2+) as cofactor.

The protein resides in the cytoplasm. It catalyses the reaction N(6)-acetyl-L-lysyl-[protein] + NAD(+) + H2O = 2''-O-acetyl-ADP-D-ribose + nicotinamide + L-lysyl-[protein]. Its function is as follows. NAD-dependent protein deacetylase which modulates the activities of several enzymes which are inactive in their acetylated form. Deacetylates the N-terminal lysine residue of albA1, the major archaeal DNA compaction protein and that, in turn, increases albA1's DNA binding affinity, thereby repressing transcription. This Saccharolobus solfataricus (strain ATCC 35092 / DSM 1617 / JCM 11322 / P2) (Sulfolobus solfataricus) protein is NAD-dependent protein deacetylase.